Here is a 428-residue protein sequence, read N- to C-terminus: 5-methylthioadenosine/S-adenosylhomocysteine deaminase (428 aa).

2 residues coordinate Zn(2+): H65 and H67. E94, R158, and H184 together coordinate substrate. A Zn(2+)-binding site is contributed by H211. Substrate contacts are provided by E214 and D299. D299 serves as a coordination point for Zn(2+).

It belongs to the metallo-dependent hydrolases superfamily. MTA/SAH deaminase family. It depends on Zn(2+) as a cofactor.

It catalyses the reaction S-adenosyl-L-homocysteine + H2O + H(+) = S-inosyl-L-homocysteine + NH4(+). It carries out the reaction S-methyl-5'-thioadenosine + H2O + H(+) = S-methyl-5'-thioinosine + NH4(+). In terms of biological role, catalyzes the deamination of 5-methylthioadenosine and S-adenosyl-L-homocysteine into 5-methylthioinosine and S-inosyl-L-homocysteine, respectively. Is also able to deaminate adenosine. This Moorella thermoacetica (strain ATCC 39073 / JCM 9320) protein is 5-methylthioadenosine/S-adenosylhomocysteine deaminase.